The sequence spans 122 residues: Large ribosomal subunit protein uL14 (122 aa).

Belongs to the universal ribosomal protein uL14 family. Part of the 50S ribosomal subunit. Forms a cluster with proteins L3 and L19. In the 70S ribosome, L14 and L19 interact and together make contacts with the 16S rRNA in bridges B5 and B8.

Its function is as follows. Binds to 23S rRNA. Forms part of two intersubunit bridges in the 70S ribosome. This Acinetobacter baumannii (strain AB307-0294) protein is Large ribosomal subunit protein uL14.